Here is a 316-residue protein sequence, read N- to C-terminus: Transaldolase 2 (316 aa).

Lys-131 (schiff-base intermediate with substrate) is an active-site residue.

The protein belongs to the transaldolase family. Type 1 subfamily. In terms of assembly, homodimer.

It localises to the cytoplasm. The enzyme catalyses D-sedoheptulose 7-phosphate + D-glyceraldehyde 3-phosphate = D-erythrose 4-phosphate + beta-D-fructose 6-phosphate. It participates in carbohydrate degradation; pentose phosphate pathway; D-glyceraldehyde 3-phosphate and beta-D-fructose 6-phosphate from D-ribose 5-phosphate and D-xylulose 5-phosphate (non-oxidative stage): step 2/3. In terms of biological role, transaldolase is important for the balance of metabolites in the pentose-phosphate pathway. The polypeptide is Transaldolase 2 (Salmonella paratyphi A (strain ATCC 9150 / SARB42)).